The chain runs to 469 residues: Zinc finger and BTB domain-containing protein 8A.1-B (469 aa).

The 69-residue stretch at 24–92 (CDCHIIVEGQ…VYSGKLPLSG (69 aa)) folds into the BTB domain. 2 C2H2-type zinc fingers span residues 315-337 (FKCP…LRCH) and 343-366 (YPCE…QTIH).

The protein localises to the nucleus. Functionally, may be involved in transcriptional regulation. The chain is Zinc finger and BTB domain-containing protein 8A.1-B (zbtb8a.1-b) from Xenopus laevis (African clawed frog).